Reading from the N-terminus, the 161-residue chain is Phosphopantetheine adenylyltransferase (161 aa).

S9 contacts substrate. ATP is bound by residues 9–10 and H17; that span reads SF. K41, L73, and K87 together coordinate substrate. Residues 88–90, E98, and 122–128 each bind ATP; these read GLR and YSFVSSS.

Belongs to the bacterial CoaD family. Homohexamer. Requires Mg(2+) as cofactor.

It localises to the cytoplasm. It carries out the reaction (R)-4'-phosphopantetheine + ATP + H(+) = 3'-dephospho-CoA + diphosphate. The protein operates within cofactor biosynthesis; coenzyme A biosynthesis; CoA from (R)-pantothenate: step 4/5. Its function is as follows. Reversibly transfers an adenylyl group from ATP to 4'-phosphopantetheine, yielding dephospho-CoA (dPCoA) and pyrophosphate. The sequence is that of Phosphopantetheine adenylyltransferase from Mycobacteroides abscessus (strain ATCC 19977 / DSM 44196 / CCUG 20993 / CIP 104536 / JCM 13569 / NCTC 13031 / TMC 1543 / L948) (Mycobacterium abscessus).